The sequence spans 598 residues: NADH-ubiquinone oxidoreductase chain 5 (598 aa).

Transmembrane regions (helical) follow at residues 6–26, 32–52, 84–100, 113–133, 136–156, 241–261, 272–292, 301–320, 325–347, 370–390, 409–429, 456–476, 478–498, and 576–596; these read LTLIMNSGALLTIIVLLPPII, MILTTKLVKISMFISLIPLTI, YTVIFTPIALMITWSIM, MDKFFKYLLLFLITMITFISA, LLQLFIGWEGVGIMSFLLISW, TPVSALLHSSTMVVAGVFLLI, LMLEMTLCLGAMTTICAALCA, IIAFSTSSQLGLMMVAVGLN, AFLHMCTHAFFKAMLFLCSGSII, TTCMTIGSAALMGLPFLAGFF, LMVTLMAVTLTTAYSSRLIIM, LAWGSLISGLILTSTLPPMKP, IFTMPTYIKTIALMMFIISLI, and LNSATLPLMAFALTLITLSLT.

This sequence belongs to the complex I subunit 5 family.

The protein localises to the mitochondrion inner membrane. The enzyme catalyses a ubiquinone + NADH + 5 H(+)(in) = a ubiquinol + NAD(+) + 4 H(+)(out). Core subunit of the mitochondrial membrane respiratory chain NADH dehydrogenase (Complex I) that is believed to belong to the minimal assembly required for catalysis. Complex I functions in the transfer of electrons from NADH to the respiratory chain. The immediate electron acceptor for the enzyme is believed to be ubiquinone. The sequence is that of NADH-ubiquinone oxidoreductase chain 5 (MT-ND5) from Petromyzon marinus (Sea lamprey).